Reading from the N-terminus, the 154-residue chain is Low molecular weight protein-tyrosine-phosphatase PtpA (154 aa).

Cysteine 8 serves as the catalytic Nucleophile. Residue arginine 14 is part of the active site. Catalysis depends on aspartate 120, which acts as the Proton donor.

The protein belongs to the low molecular weight phosphotyrosine protein phosphatase family.

It catalyses the reaction O-phospho-L-tyrosyl-[protein] + H2O = L-tyrosyl-[protein] + phosphate. In terms of biological role, dephosphorylates the phosphotyrosine-containing proteins. The sequence is that of Low molecular weight protein-tyrosine-phosphatase PtpA (ptpA) from Staphylococcus saprophyticus subsp. saprophyticus (strain ATCC 15305 / DSM 20229 / NCIMB 8711 / NCTC 7292 / S-41).